Consider the following 235-residue polypeptide: MNIRALLLSASRVGDTPYLEHTLPFIAPLTEHARNWVFIPYAGISLGYDVYLEKVREGLRNLNINISGIHEHADPRQAIRDADGIFVGGGNTFHLLHELYRYDLLFVIREQVEAGKPYVGWSAGSNIAGLSIRTTNDMPIIEPPSFTALGLLPFQLNPHYTDYQAPGHNGETRAQRLLEFTMVDPLTPVVGIQEGSALYRQGDKLTLLGDKEAYFFKGSVQKSPIAAGADLSELL.

Active-site charge relay system residues include serine 122, aspartate 137, and histidine 159.

Belongs to the peptidase S51 family.

It is found in the cytoplasm. The enzyme catalyses Dipeptidase E catalyzes the hydrolysis of dipeptides Asp-|-Xaa. It does not act on peptides with N-terminal Glu, Asn or Gln, nor does it cleave isoaspartyl peptides.. Hydrolyzes dipeptides containing N-terminal aspartate residues. May play a role in allowing the cell to use peptide aspartate to spare carbon otherwise required for the synthesis of the aspartate family of amino acids. The polypeptide is Peptidase E (Shewanella amazonensis (strain ATCC BAA-1098 / SB2B)).